Here is a 65-residue protein sequence, read N- to C-terminus: Large ribosomal subunit protein bL35 (65 aa).

Belongs to the bacterial ribosomal protein bL35 family.

In Parabacteroides distasonis (strain ATCC 8503 / DSM 20701 / CIP 104284 / JCM 5825 / NCTC 11152), this protein is Large ribosomal subunit protein bL35.